Reading from the N-terminus, the 93-residue chain is UPF0390 protein C24B10.18 (93 aa).

Positions 1–32 (MAQGEFKKKKNSSANKGGRVTKHSKNPKKGAR) are disordered. A compositionally biased stretch (basic residues) spans 19–31 (RVTKHSKNPKKGA).

Belongs to the UPF0390 family.

The sequence is that of UPF0390 protein C24B10.18 from Schizosaccharomyces pombe (strain 972 / ATCC 24843) (Fission yeast).